Consider the following 194-residue polypeptide: Small ribosomal subunit protein uS5 (194 aa).

The S5 DRBM domain occupies 26–89 (LEEKVVEIRR…ADAKKHLIRV (64 aa)).

The protein belongs to the universal ribosomal protein uS5 family. As to quaternary structure, part of the 30S ribosomal subunit. Contacts proteins S4 and S8.

Functionally, with S4 and S12 plays an important role in translational accuracy. Its function is as follows. Located at the back of the 30S subunit body where it stabilizes the conformation of the head with respect to the body. The protein is Small ribosomal subunit protein uS5 of Persephonella marina (strain DSM 14350 / EX-H1).